We begin with the raw amino-acid sequence, 193 residues long: MAIKLIVGLGNPGQEYMFTRHNAGFWFVLHLAQQFNITLAPDKKFHGVTGRGQIHGHDVRLLMPLTFMNKSGQSVVPMVKFYGIDNDELLIAHDELDIPAGSIKLKTDGGHGGHNGLRDITPHIGNDFHRLRVGIGHPGHKSKVSGHVLSKAAPDEQIAIDSALSAAFDALPLLLGGDVEKARSQINGFKLPE.

Y16 lines the tRNA pocket. Residue H21 is the Proton acceptor of the active site. Residues F67, N69, and N115 each coordinate tRNA.

The protein belongs to the PTH family. In terms of assembly, monomer.

The protein resides in the cytoplasm. It catalyses the reaction an N-acyl-L-alpha-aminoacyl-tRNA + H2O = an N-acyl-L-amino acid + a tRNA + H(+). In terms of biological role, hydrolyzes ribosome-free peptidyl-tRNAs (with 1 or more amino acids incorporated), which drop off the ribosome during protein synthesis, or as a result of ribosome stalling. Its function is as follows. Catalyzes the release of premature peptidyl moieties from peptidyl-tRNA molecules trapped in stalled 50S ribosomal subunits, and thus maintains levels of free tRNAs and 50S ribosomes. The polypeptide is Peptidyl-tRNA hydrolase (Psychrobacter cryohalolentis (strain ATCC BAA-1226 / DSM 17306 / VKM B-2378 / K5)).